Consider the following 1036-residue polypeptide: UDP-N-acetylglucosamine--peptide N-acetylglucosaminyltransferase 110 kDa subunit (1036 aa).

A2 is subject to N-acetylalanine. S3 and S4 each carry phosphoserine; by GSK3-beta; alternate. O-linked (GlcNAc) serine; alternate glycosylation is found at S3 and S4. 12 TPR repeats span residues 11-44 (STGL…EPDN), 79-112 (AEAY…KPDF), 113-146 (IDGY…NPDL), 147-180 (YCVR…QPNF), 181-214 (AVAW…DPNF), 215-248 (LDAY…SPNH), 249-282 (AVVH…QPHF), 283-316 (PDAY…CPTH), 317-350 (ADSL…FPEF), 351-384 (AAAH…SPTF), 385-418 (ADAY…NPAF), and 419-452 (ADAH…KPDF). S389 carries O-linked (GlcNAc) serine; by autocatalysis glycosylation. T444 carries the post-translational modification Phosphothreonine. One copy of the TPR 13; truncated repeat lies at 453–463 (PDAYCNLAHCL). Residues 454–456 (DAY) carry the DFP motif motif. Residues 478–493 (KLVSIVAEQLEKNRLP) carry the Nuclear localization signal motif. Catalysis depends on H498, which acts as the Proton acceptor. UDP-binding positions include Q839, K842, 896–898 (APK), 901–904 (HVRR), 920–922 (HTT), and D925. The residue at position 979 (Y979) is a Phosphotyrosine. A required for phosphatidylinositol 3,4,5-triphosphate binding region spans residues 981–1000 (KKIRGKVWKQRISSPLFNTK).

Belongs to the glycosyltransferase 41 family. O-GlcNAc transferase subfamily. Monomer; may exist in different oligomerization states in cells. Homotrimer, oligomerizes via TPR repeats 6 and 7. Trimerization is not necessary for activity in vitro, however it increases affinity for UDP-GlcNAc. A heterotrimer consisting of two 110 kDa subunits and one highly related 78 kDa subunit is isolated from liver. Component of a THAP1/THAP3-HCFC1-OGT complex. Component of the NSL complex at least composed of MOF/KAT8, KANSL1, KANSL2, KANSL3, MCRS1, PHF20, OGT1/OGT, WDR5 and HCFC1. Found in a complex with KIF5B, RHOT1, RHOT2 and TRAK1. Found in a complex composed of at least SINHCAF, SIN3A, HDAC1, SAP30, RBBP4, OGT and TET1. Component of a complex composed of KMT2E/MLL5, OGT and USP7; the complex stabilizes KMT2E/MLL5, preventing KMT2E/MLL5 ubiquitination and proteasomal-mediated degradation. Interacts (via TPRs 1-6) with SIN3A; the interaction mediates transcriptional repression in parallel with histone deacetylase. Interacts (via TPR 5-6) with TET1, TET2 and TET3. Interacts (via TPR repeats 6 and 7) with ATXN10. Interacts with NSD2. Interacts with PROSER1; this interaction mediates TET2 O-GlcNAcylation and stability by promoting the interaction between OGT and TET2. Post-translationally, several different immunologically-related forms of this protein are found in different tissues (with apparent molecular weights of 110, 80 and 78 kDa); they are probably the result of alternative splicing and/or proteolysis. In terms of processing, O-glycosylated; contains O-GlcNAc. Both p110 and p78 forms are O-glycosylated. Ubiquitinated by the SCF(FBXO31) complex, leading to its proteasomal degradation. Post-translationally, phosphorylation on Ser-3 or Ser-4 by GSK3-beta positively regulates its activity. Phosphorylation at Thr-444 by AMPK promotes nuclear localization. In terms of processing, glycosylated via autocatalysis; O-GlcNAcylation at Ser-389 promotes nuclear localization. Expressed in brain, heart, liver, thymus, muscle, lung, spleen, uterus and ovary; in the kidney only an immunologically-related 78 kDa band is present, which is also present in liver and muscle. In the pancreas, expressed in both exocrine acinar cells and in endocrine cells of the islets of Langerhans.

The protein resides in the cytoplasm. It localises to the nucleus. It is found in the cell membrane. Its subcellular location is the mitochondrion membrane. The protein localises to the cell projection. The enzyme catalyses L-seryl-[protein] + UDP-N-acetyl-alpha-D-glucosamine = 3-O-(N-acetyl-beta-D-glucosaminyl)-L-seryl-[protein] + UDP + H(+). It catalyses the reaction L-threonyl-[protein] + UDP-N-acetyl-alpha-D-glucosamine = 3-O-(N-acetyl-beta-D-glucosaminyl)-L-threonyl-[protein] + UDP + H(+). It participates in protein modification; protein glycosylation. Its activity is regulated as follows. Inhibited by UDP, UTP and UDP-GlcNAc; 50 mM NaCl or KCl inhibit activity about 70%. In terms of biological role, catalyzes the transfer of a single N-acetylglucosamine from UDP-GlcNAc to a serine or threonine residue in cytoplasmic and nuclear proteins resulting in their modification with a beta-linked N-acetylglucosamine (O-GlcNAc). Glycosylates a large and diverse number of proteins including histone H2B, AKT1, AMPK, ATG4B, CAPRIN1, EZH2, FNIP1, GSDMD, KRT7, LMNA, LMNB1, LMNB2, RPTOR, HOXA1, PFKL, KMT2E/MLL5, MAPT/TAU, TET2, RBL2, RET, NOD2 and HCFC1. Can regulate their cellular processes via cross-talk between glycosylation and phosphorylation or by affecting proteolytic processing. Involved in insulin resistance in muscle and adipocyte cells via glycosylating insulin signaling components and inhibiting the 'Thr-308' phosphorylation of AKT1, enhancing IRS1 phosphorylation and attenuating insulin signaling. Involved in glycolysis regulation by mediating glycosylation of 6-phosphofructokinase PFKL, inhibiting its activity. Plays a key role in chromatin structure by mediating O-GlcNAcylation of 'Ser-112' of histone H2B: recruited to CpG-rich transcription start sites of active genes via its interaction with TET proteins (TET1, TET2 or TET3). As part of the NSL complex indirectly involved in acetylation of nucleosomal histone H4 on several lysine residues. O-GlcNAcylation of 'Ser-75' of EZH2 increases its stability, and facilitating the formation of H3K27me3 by the PRC2/EED-EZH2 complex. Stabilizes KMT2E/MLL5 by mediating its glycosylation, thereby preventing KMT2E/MLL5 ubiquitination. Regulates circadian oscillation of the clock genes and glucose homeostasis in the liver. Stabilizes clock proteins BMAL1 and CLOCK through O-glycosylation, which prevents their ubiquitination and subsequent degradation. Promotes the CLOCK-BMAL1-mediated transcription of genes in the negative loop of the circadian clock such as PER1/2 and CRY1/2. O-glycosylates HCFC1 and regulates its proteolytic processing and transcriptional activity. Component of a THAP1/THAP3-HCFC1-OGT complex that is required for the regulation of the transcriptional activity of RRM1. Regulates mitochondrial motility in neurons by mediating glycosylation of TRAK1. Promotes autophagy by mediating O-glycosylation of ATG4B. Acts as a regulator of mTORC1 signaling by mediating O-glycosylation of RPTOR and FNIP1: O-GlcNAcylation of RPTOR in response to glucose sufficiency promotes activation of the mTORC1 complex. This chain is UDP-N-acetylglucosamine--peptide N-acetylglucosaminyltransferase 110 kDa subunit (Ogt), found in Rattus norvegicus (Rat).